We begin with the raw amino-acid sequence, 489 residues long: Rhamnulokinase (489 aa).

Ala13 to Arg17 contributes to the ATP binding site. Cysteines 68 and 222 form a disulfide. Substrate-binding positions include Gly83 and His236 to Thr238. The Proton acceptor role is filled by Asp237. Thr259 serves as a coordination point for ATP. Position 296 (Asn296) interacts with substrate. ATP is bound at residue Gln304. Cys353 and Cys370 form a disulfide bridge. Gly402 contacts ATP. Cys413 and Cys417 form a disulfide bridge.

The protein belongs to the rhamnulokinase family. Mg(2+) is required as a cofactor.

The enzyme catalyses L-rhamnulose + ATP = L-rhamnulose 1-phosphate + ADP + H(+). Its pathway is carbohydrate degradation; L-rhamnose degradation; glycerone phosphate from L-rhamnose: step 2/3. Its function is as follows. Involved in the catabolism of L-rhamnose (6-deoxy-L-mannose). Catalyzes the transfer of the gamma-phosphate group from ATP to the 1-hydroxyl group of L-rhamnulose to yield L-rhamnulose 1-phosphate. The polypeptide is Rhamnulokinase (Shigella flexneri serotype 5b (strain 8401)).